The chain runs to 477 residues: 3-succinoylsemialdehyde-pyridine dehydrogenase (477 aa).

Residue 202 to 208 (GDGPGVG) participates in NAD(+) binding. Catalysis depends on residues glutamate 246 and cysteine 280.

It belongs to the aldehyde dehydrogenase family.

The catalysed reaction is 4-oxo-4-(pyridin-3-yl)butanal + NADP(+) + H2O = 4-oxo-4-(pyridin-3-yl)butanoate + NADPH + 2 H(+). It participates in alkaloid degradation; nicotine degradation. Catalyzes the dehydrogenation of 3-succinoylsemialdehyde-pyridine to 3-succinoyl-pyridine in the nicotine degradation pathway. This is 3-succinoylsemialdehyde-pyridine dehydrogenase (ald) from Pseudomonas sp.